Consider the following 208-residue polypeptide: N-(5'-phosphoribosyl)anthranilate isomerase (208 aa).

It belongs to the TrpF family.

It catalyses the reaction N-(5-phospho-beta-D-ribosyl)anthranilate = 1-(2-carboxyphenylamino)-1-deoxy-D-ribulose 5-phosphate. It participates in amino-acid biosynthesis; L-tryptophan biosynthesis; L-tryptophan from chorismate: step 3/5. The sequence is that of N-(5'-phosphoribosyl)anthranilate isomerase from Neisseria meningitidis serogroup B (strain ATCC BAA-335 / MC58).